We begin with the raw amino-acid sequence, 516 residues long: Extracellular endo-inulinase inuB (516 aa).

An N-terminal signal peptide occupies residues 1–25; that stretch reads MLNPKVAYMVWMTCLGLTLPSQAQS. Residues 40-43, Q59, W67, and 99-100 contribute to the substrate site; these read WMNE and FT. Residue E43 is part of the active site. N109 is a glycosylation site (N-linked (GlcNAc...) asparagine). Substrate is bound by residues 175-176 and E233; that span reads RD. N372, N419, and N424 each carry an N-linked (GlcNAc...) asparagine glycan.

Belongs to the glycosyl hydrolase 32 family.

The protein localises to the secreted. It carries out the reaction Endohydrolysis of (2-&gt;1)-beta-D-fructosidic linkages in inulin.. Functionally, endo-inulinase involved in utilization of the plant storage polymer inulin, consisting of fructooligosaccharides with a degree of polymerization (DP) value from 2 to 60. The sequence is that of Extracellular endo-inulinase inuB (inuB) from Aspergillus niger.